Here is a 507-residue protein sequence, read N- to C-terminus: Maturase K (507 aa).

Belongs to the intron maturase 2 family. MatK subfamily.

The protein resides in the plastid. Its subcellular location is the chloroplast. In terms of biological role, usually encoded in the trnK tRNA gene intron. Probably assists in splicing its own and other chloroplast group II introns. In Lyonia lucida (Fetterbush), this protein is Maturase K.